Here is a 144-residue protein sequence, read N- to C-terminus: MELNNLKPAAGAKHAKRRVGRGIGSGLGKTAGRGHKGQKSRSGGFHKVGFEGGQMPLQRRLPKRGFTSLTKEFVGEVRLSDLEKLPVDEIDLLALKQAGLVGELTKSAKIIATGELKRKIVVKGLGATKGARAAIEAAGGSFAE.

The disordered stretch occupies residues 1–56 (MELNNLKPAAGAKHAKRRVGRGIGSGLGKTAGRGHKGQKSRSGGFHKVGFEGGQMP). The span at 21-31 (RGIGSGLGKTA) shows a compositional bias: gly residues.

It belongs to the universal ribosomal protein uL15 family. As to quaternary structure, part of the 50S ribosomal subunit.

Its function is as follows. Binds to the 23S rRNA. The polypeptide is Large ribosomal subunit protein uL15 (Burkholderia cenocepacia (strain HI2424)).